The following is a 555-amino-acid chain: Carboxypeptidase Y homolog A (555 aa).

The signal sequence occupies residues 1–17 (MRGLATTLLIGAAAAAT). Positions 18–136 (YPAQQVLKAP…RLETFDLRVK (119 aa)) are excised as a propeptide. 5 disulfides stabilise this stretch: Cys191/Cys430, Cys325/Cys339, Cys349/Cys372, Cys356/Cys365, and Cys394/Cys400. Asn222 carries N-linked (GlcNAc...) asparagine glycosylation. Ser278 is a catalytic residue. Residue Asp469 is part of the active site. Residue Asn520 is glycosylated (N-linked (GlcNAc...) asparagine). His531 is an active-site residue.

This sequence belongs to the peptidase S10 family.

It is found in the vacuole. It catalyses the reaction Release of a C-terminal amino acid with broad specificity.. In terms of biological role, vacuolar carboxypeptidase involved in degradation of small peptides. Digests preferentially peptides containing an aliphatic or hydrophobic residue in P1' position, as well as methionine, leucine or phenylalanine in P1 position of ester substrate. This Talaromyces marneffei (strain ATCC 18224 / CBS 334.59 / QM 7333) (Penicillium marneffei) protein is Carboxypeptidase Y homolog A (cpyA).